Here is a 184-residue protein sequence, read N- to C-terminus: Large ribosomal subunit protein uL6 (184 aa).

It belongs to the universal ribosomal protein uL6 family. In terms of assembly, part of the 50S ribosomal subunit.

In terms of biological role, this protein binds to the 23S rRNA, and is important in its secondary structure. It is located near the subunit interface in the base of the L7/L12 stalk, and near the tRNA binding site of the peptidyltransferase center. In Thermotoga petrophila (strain ATCC BAA-488 / DSM 13995 / JCM 10881 / RKU-1), this protein is Large ribosomal subunit protein uL6.